We begin with the raw amino-acid sequence, 152 residues long: MLGLGHDVVDVPAFAKQLNEPGTRMRNLFSMREIWQTAQRSQLKHDDEAVHLAARWAGKEAFLKAWCAAISRHAKDGAEVAYPYTLDNFPWVRIEILDDSHGVPRVILSSEVQRKVQQSLGLPLDPVCQSYDISISISHDGPIASAVVMLEI.

Mg(2+)-binding residues include Asp-7 and Glu-60.

It belongs to the P-Pant transferase superfamily. AcpS family. Mg(2+) is required as a cofactor.

The protein resides in the cytoplasm. It carries out the reaction apo-[ACP] + CoA = holo-[ACP] + adenosine 3',5'-bisphosphate + H(+). In terms of biological role, transfers the 4'-phosphopantetheine moiety from coenzyme A to a Ser of acyl-carrier-protein. The chain is Holo-[acyl-carrier-protein] synthase from Bifidobacterium adolescentis (strain ATCC 15703 / DSM 20083 / NCTC 11814 / E194a).